A 289-amino-acid polypeptide reads, in one-letter code: 4-diphosphocytidyl-2-C-methyl-D-erythritol kinase (289 aa).

K11 is a catalytic residue. ATP is bound at residue 95-105 (PMGGGIGGGSS). D137 is an active-site residue.

This sequence belongs to the GHMP kinase family. IspE subfamily.

It catalyses the reaction 4-CDP-2-C-methyl-D-erythritol + ATP = 4-CDP-2-C-methyl-D-erythritol 2-phosphate + ADP + H(+). It participates in isoprenoid biosynthesis; isopentenyl diphosphate biosynthesis via DXP pathway; isopentenyl diphosphate from 1-deoxy-D-xylulose 5-phosphate: step 3/6. In terms of biological role, catalyzes the phosphorylation of the position 2 hydroxy group of 4-diphosphocytidyl-2C-methyl-D-erythritol. The sequence is that of 4-diphosphocytidyl-2-C-methyl-D-erythritol kinase from Aeromonas salmonicida (strain A449).